A 109-amino-acid polypeptide reads, in one-letter code: UPF0060 membrane protein ABO_1373 (109 aa).

4 helical membrane passes run 1–21 (MLAL…IVGC), 33–53 (PGWV…LLSL), 63–83 (AAYG…VEGV), and 87–107 (PWDF…MFAP).

The protein belongs to the UPF0060 family.

It localises to the cell inner membrane. The sequence is that of UPF0060 membrane protein ABO_1373 from Alcanivorax borkumensis (strain ATCC 700651 / DSM 11573 / NCIMB 13689 / SK2).